The following is a 651-amino-acid chain: Methionine--tRNA ligase (651 aa).

Residues 10–20 (AYTNGPLHLGH) carry the 'HIGH' region motif. Cys-142, Cys-145, Cys-154, and Cys-157 together coordinate Zn(2+). A 'KMSKS' region motif is present at residues 320 to 324 (KMSTS). Residue Thr-323 coordinates ATP. The region spanning 550 to 651 (YLEKIDLRVG…KDIKAGSKVR (102 aa)) is the tRNA-binding domain.

This sequence belongs to the class-I aminoacyl-tRNA synthetase family. MetG type 1 subfamily. Homodimer. Zn(2+) is required as a cofactor.

The protein localises to the cytoplasm. The enzyme catalyses tRNA(Met) + L-methionine + ATP = L-methionyl-tRNA(Met) + AMP + diphosphate. Functionally, is required not only for elongation of protein synthesis but also for the initiation of all mRNA translation through initiator tRNA(fMet) aminoacylation. This is Methionine--tRNA ligase from Methanocaldococcus jannaschii (strain ATCC 43067 / DSM 2661 / JAL-1 / JCM 10045 / NBRC 100440) (Methanococcus jannaschii).